A 152-amino-acid polypeptide reads, in one-letter code: Superoxide dismutase [Cu-Zn] (152 aa).

Cu cation is bound by residues His45, His47, and His62. Cys56 and Cys145 form a disulfide bridge. 4 residues coordinate Zn(2+): His62, His70, His79, and Asp82. Residue His119 participates in Cu cation binding.

Belongs to the Cu-Zn superoxide dismutase family. Homodimer. It depends on Cu cation as a cofactor. The cofactor is Zn(2+).

It is found in the cytoplasm. The enzyme catalyses 2 superoxide + 2 H(+) = H2O2 + O2. Destroys radicals which are normally produced within the cells and which are toxic to biological systems. This Carica papaya (Papaya) protein is Superoxide dismutase [Cu-Zn] (SODCC).